Reading from the N-terminus, the 475-residue chain is MAALTTLFKYIDENQDRYIKKLAKWVAIQSVSAWPEKRGEIRRMMEVAAADVKQLGGSVELVDIGKQKLPDGSEIPLPPILLGRLGSDPQKKTVCIYGHLDVQPAALEDGWDSEPFTLVERDGKLYGRGSTDDKGPVAGWINALEAYQKTGQEIPVNVRFCLEGMEESGSEGLDELIFARKDTFFKDVDYVCISDNYWLGKKKPCITYGLRGICYFFIEVECSNKDLHSGVYGGSVHEAMTDLILLMGSLVDKRGNILIPGINEAVAAVTEEEHKLYDDIDFDIEEFAKDVGAQILLHSHKKDILMHRWRYPSLSLHGIEGAFSGSGAKTVIPRKVVGKFSIRLVPNMTPEVVGEQVTSYLTKKFAELRSPNEFKVYMGHGGKPWVSDFSHPHYLAGRRAMKTVFGVEPDLTREGGSIPVTLTFQEATGKNVMLLPVGSADDGAHSQNEKLNRYNYIEGTKMLAAYLYEVSQLKD.

An N-acetylalanine modification is found at Ala2. Residue Lys9 is modified to N6-acetyllysine. The residue at position 58 (Ser58) is a Phosphoserine. His99 lines the Mn(2+) pocket. Asp101 is a catalytic residue. Position 132 (Asp132) interacts with Mn(2+). The Proton acceptor role is filled by Glu166. Residues 166–167, Asp195, and His228 each bind substrate; that span reads EE. Positions 167 and 195 each coordinate Mn(2+). Ser299 is modified (phosphoserine). 4 residues coordinate substrate: Thr330, Arg343, Ser417, and His445. His445 contributes to the Mn(2+) binding site.

This sequence belongs to the peptidase M20A family. Homodimer. It depends on Mn(2+) as a cofactor. As to expression, ubiquitously expressed with higher levels in kidney and liver (at protein level). Expressed in peripheral blood leukocytes. Expressed in gastric mucosa and down-regulated in gastric cancer mucosal tissues (at protein level). Broadly expressed in fetal tissues. Expressed in adult liver and placenta.

The protein localises to the cytoplasm. The catalysed reaction is Hydrolysis of dipeptides, preferentially hydrophobic dipeptides including prolyl amino acids.. It catalyses the reaction L-threonyl-L-threonine + H2O = 2 L-threonine. The enzyme catalyses L-threonyl-L-serine + H2O = L-threonine + L-serine. It carries out the reaction L-seryl-L-threonine + H2O = L-threonine + L-serine. The catalysed reaction is L-cysteinylglycine + H2O = L-cysteine + glycine. It catalyses the reaction L-alanyl-L-cysteine + H2O = L-cysteine + L-alanine. The enzyme catalyses (S)-lactate + L-phenylalanine = N-[(S)-lactoyl]-L-phenylalanine + H2O. With respect to regulation, inhibited by p-hydroxymercurybenzoate. The inhibitory concentration 50% (IC(50)) is 13 uM. Inhibited by bestatin. The inhibitory concentration 50% (IC(50)) is 7 nM at pH 9.5. Its function is as follows. Catalyzes the peptide bond hydrolysis in dipeptides, displaying a non-redundant activity toward threonyl dipeptides. Mediates threonyl dipeptide catabolism in a tissue-specific way. Has high dipeptidase activity toward cysteinylglycine, an intermediate metabolite in glutathione metabolism. Metabolizes N-lactoyl-amino acids, both through hydrolysis to form lactic acid and amino acids, as well as through their formation by reverse proteolysis. Plays a role in the regulation of cell cycle arrest and apoptosis. This Homo sapiens (Human) protein is Cytosolic non-specific dipeptidase.